The primary structure comprises 902 residues: MEQINSNSRKKKQQLEVFKYFASVLTKEDKPISISNGMLDMPTVNSSKLTAGNGKPDTEKLTGELILTYDDFIELISSSKTIYSKFTDHSFNLNQIPKNVFGCIFFAIDEQNKGYLTLNDWFYFNNLLEYDNYHLIILYEFFRKFDVENLKAKQKKELGSSSFNLKAADDRIKSINYGNRFLSFDDLLLNLNQFKDTIRLLHESIDDNFVKDNKLLLDWNDFRFLKFYKCYHENEEYLSLNSLVTILQNDLKNEKIFIGFDRLAQMDSQGHRLALSKNQLTYLLRLFYSHRVSADIFSSLNLSNTELLKADNNSIPYNVFKDIFYLFQNFDLLNQIFHKYVTENNLNEQDIREQIVTKNDFMTVLNAQYNKVNNIIEFSPSQINLLFSIVANSKENRRLRKRNQDRDDELLNDHHYDSDIDFFIHNEYLHGVSRSRKNLESFNDYYHDLSDGFDQDSGVKKASKASTGLFESVFGGKKDKATMRSDLTIEDFMKILNPNYLNDLVHQMELQKNQNESLYINYYFYPIFDSLYNFSLGSIAGCIGATVVYPIDFIKTRMQAQRSLAQYKNSIDCLLKIISREGIKGLYSGLGPQLIGVAPEKAIKLTVNDFMRNRLTDKNGKLSLFPEIISGASAGACQVIFTNPLEIVKIRLQVQSDYVGENIQQANETATQIVKKLGLRGLYNGVAACLMRDVPFSAIYFPTYAHLKKDLFDFDPNDKTKRNRLKTWELLTAGAIAGMPAAFLTTPFDVIKTRLQIDPRKGETKYNGIFHAIRTILKEESFRSFFKGGGARVLRSSPQFGFTLAAYELFKGFIPSPDNKLKSREGRKRFCIDDDAGNEETVVHSNGELPQQKFYSDDRKHANYYYKSCQIAKTFIDLDNNFSRFDSSVYKNFQEHLRSING.

Solcar repeat units follow at residues 528-614, 622-710, and 725-813; these read FDSL…MRNR, LSLF…LKKD, and LKTW…FKGF. Helical transmembrane passes span 534 to 554, 591 to 611, 622 to 642, 681 to 702, 731 to 751, and 786 to 806; these read FSLG…IDFI, GPQL…NDFM, LSLF…VIFT, GLYN…IYFP, LTAG…FDVI, and FKGG…TLAA.

It belongs to the mitochondrial carrier (TC 2.A.29) family.

The protein localises to the mitochondrion inner membrane. Its function is as follows. Calcium-dependent mitochondrial aspartate and glutamate carrier. Transport of glutamate in mitochondria is required for mitochondrial transamination reactions and ornithine synthesis. Plays also a role in malate-aspartate NADH shuttle, which is critical for growth on acetate and fatty acids. This chain is Mitochondrial aspartate-glutamate transporter AGC1 (AGC1), found in Saccharomyces cerevisiae (strain ATCC 204508 / S288c) (Baker's yeast).